Reading from the N-terminus, the 164-residue chain is ATP synthase subunit b (164 aa).

The chain crosses the membrane as a helical span at residues 12-32; that stretch reads FILVTGSVIVLLLLIKAFAWG.

Belongs to the ATPase B chain family. In terms of assembly, F-type ATPases have 2 components, F(1) - the catalytic core - and F(0) - the membrane proton channel. F(1) has five subunits: alpha(3), beta(3), gamma(1), delta(1), epsilon(1). F(0) has three main subunits: a(1), b(2) and c(10-14). The alpha and beta chains form an alternating ring which encloses part of the gamma chain. F(1) is attached to F(0) by a central stalk formed by the gamma and epsilon chains, while a peripheral stalk is formed by the delta and b chains.

Its subcellular location is the cell membrane. F(1)F(0) ATP synthase produces ATP from ADP in the presence of a proton or sodium gradient. F-type ATPases consist of two structural domains, F(1) containing the extramembraneous catalytic core and F(0) containing the membrane proton channel, linked together by a central stalk and a peripheral stalk. During catalysis, ATP synthesis in the catalytic domain of F(1) is coupled via a rotary mechanism of the central stalk subunits to proton translocation. Its function is as follows. Component of the F(0) channel, it forms part of the peripheral stalk, linking F(1) to F(0). This is ATP synthase subunit b from Streptococcus equi subsp. zooepidemicus (strain MGCS10565).